A 517-amino-acid chain; its full sequence is Probable bifunctional methylthioribulose-1-phosphate dehydratase/enolase-phosphatase E1 (517 aa).

A methylthioribulose-1-phosphate dehydratase region spans residues 1–242 (MACSGCSCEA…CIKLYQLGID (242 aa)). Cys114 is a substrate binding site. 2 residues coordinate Zn(2+): His132 and His134. The Proton donor/acceptor; for methylthioribulose-1-phosphate dehydratase activity role is filled by Glu157. Residue His207 participates in Zn(2+) binding. An enolase-phosphatase E1 region spans residues 278–517 (VVLDIEGTTT…FRTIKSFSEI (240 aa)). Mg(2+) is bound by residues Asp281 and Glu283. Residues 416–417 (SS) and Lys450 contribute to the substrate site. Asp476 is a binding site for Mg(2+).

In the N-terminal section; belongs to the aldolase class II family. MtnB subfamily. This sequence in the C-terminal section; belongs to the HAD-like hydrolase superfamily. MasA/MtnC family. Zn(2+) serves as cofactor. It depends on Mg(2+) as a cofactor.

It carries out the reaction 5-(methylsulfanyl)-D-ribulose 1-phosphate = 5-methylsulfanyl-2,3-dioxopentyl phosphate + H2O. It catalyses the reaction 5-methylsulfanyl-2,3-dioxopentyl phosphate + H2O = 1,2-dihydroxy-5-(methylsulfanyl)pent-1-en-3-one + phosphate. It functions in the pathway amino-acid biosynthesis; L-methionine biosynthesis via salvage pathway; L-methionine from S-methyl-5-thio-alpha-D-ribose 1-phosphate: step 2/6. The protein operates within amino-acid biosynthesis; L-methionine biosynthesis via salvage pathway; L-methionine from S-methyl-5-thio-alpha-D-ribose 1-phosphate: step 3/6. It participates in amino-acid biosynthesis; L-methionine biosynthesis via salvage pathway; L-methionine from S-methyl-5-thio-alpha-D-ribose 1-phosphate: step 4/6. The polypeptide is Probable bifunctional methylthioribulose-1-phosphate dehydratase/enolase-phosphatase E1 (Zea mays (Maize)).